The chain runs to 306 residues: Glutaminase (306 aa).

Substrate is bound by residues Ser-64, Asn-115, Glu-159, Asn-166, Tyr-190, Tyr-242, and Val-260.

This sequence belongs to the glutaminase family. In terms of assembly, homotetramer.

The enzyme catalyses L-glutamine + H2O = L-glutamate + NH4(+). The chain is Glutaminase from Photobacterium profundum (strain SS9).